A 280-amino-acid chain; its full sequence is Transmembrane protein 45B (280 aa).

7 helical membrane-spanning segments follow: residues 7-27 (HALP…KYPL), 49-69 (LIEG…EQFV), 96-116 (MYLF…PLNL), 120-140 (LDRL…YYHV), 150-170 (IHSL…IEVF), 184-204 (LTIL…PLGG), and 216-236 (VMFI…IMAI).

It belongs to the TMEM45 family.

The protein localises to the membrane. This chain is Transmembrane protein 45B (tmem45b), found in Xenopus tropicalis (Western clawed frog).